The primary structure comprises 139 residues: Small integral membrane protein 34 (139 aa).

Residues 46–66 form a helical membrane-spanning segment; the sequence is GTSAAWYILTIIGIYAVIFVF.

It is found in the membrane. This is Small integral membrane protein 34 from Homo sapiens (Human).